The following is an 85-amino-acid chain: Large ribosomal subunit protein bL27 (85 aa).

Residues 1–22 (MAHKKGQGSSRNGRDSPGQRRG) are disordered.

This sequence belongs to the bacterial ribosomal protein bL27 family.

The protein is Large ribosomal subunit protein bL27 of Anaeromyxobacter dehalogenans (strain 2CP-1 / ATCC BAA-258).